A 152-amino-acid polypeptide reads, in one-letter code: Mediator of RNA polymerase II transcription subunit 9 (152 aa).

Positions 98–150 form a coiled coil; it reads IKRCKALLQENEEVRNLLANSIEEWENIIADKEQQLRVKAKVLRDLDARIEKI.

Belongs to the Mediator complex subunit 9 family. In terms of assembly, component of the Mediator complex.

Its subcellular location is the nucleus. In terms of biological role, component of the Mediator complex, a coactivator involved in the regulated transcription of nearly all RNA polymerase II-dependent genes. Mediator functions as a bridge to convey information from gene-specific regulatory proteins to the basal RNA polymerase II transcription machinery. Mediator is recruited to promoters by direct interactions with regulatory proteins and serves as a scaffold for the assembly of a functional preinitiation complex with RNA polymerase II and the general transcription factors. The polypeptide is Mediator of RNA polymerase II transcription subunit 9 (CSE2) (Candida glabrata (strain ATCC 2001 / BCRC 20586 / JCM 3761 / NBRC 0622 / NRRL Y-65 / CBS 138) (Yeast)).